The sequence spans 307 residues: Transaldolase (307 aa).

The active-site Schiff-base intermediate with substrate is the lysine 125.

The protein belongs to the transaldolase family. Type 1 subfamily. As to quaternary structure, homodimer.

It is found in the cytoplasm. It catalyses the reaction D-sedoheptulose 7-phosphate + D-glyceraldehyde 3-phosphate = D-erythrose 4-phosphate + beta-D-fructose 6-phosphate. The protein operates within carbohydrate degradation; pentose phosphate pathway; D-glyceraldehyde 3-phosphate and beta-D-fructose 6-phosphate from D-ribose 5-phosphate and D-xylulose 5-phosphate (non-oxidative stage): step 2/3. Transaldolase is important for the balance of metabolites in the pentose-phosphate pathway. The sequence is that of Transaldolase from Pseudomonas paraeruginosa (strain DSM 24068 / PA7) (Pseudomonas aeruginosa (strain PA7)).